We begin with the raw amino-acid sequence, 693 residues long: Iron-sulfur clusters transporter atm1, mitochondrial (693 aa).

Residues 1–28 (MLERCPWKLISSPRNIPARSFLNSRGTY) constitute a mitochondrion transit peptide. Over 29–118 (LVLRKSNILP…PKGKTNLKVR (90 aa)) the chain is Mitochondrial matrix. Residues 119–140 (VVSALALLVAAKILNVQVPFYF) form a helical membrane-spanning segment. The 291-residue stretch at 119-409 (VVSALALLVA…LGSVYREMRQ (291 aa)) folds into the ABC transmembrane type-1 domain. Residues 141 to 163 (KSIIDTMNTTLVQEVGALWSTVG) lie on the Mitochondrial intermembrane side of the membrane. Residues 164–187 (AVVLGYGFARIFSTVFQELRNSVF) traverse the membrane as a helical segment. Over 188–236 (AIVSQSAIRSVSSNVYQHLLNLDMNFHLSKQTGSITRAMDRGTKGISFI) the chain is Mitochondrial matrix. The chain crosses the membrane as a helical span at residues 237 to 260 (LSSMVLHIIPITLEIAMVSGILTY). Lys-261 is a topological domain (mitochondrial intermembrane). The helical transmembrane segment at 262–282 (YGPSFSAIAATTVALYALFTV) threads the bilayer. Topologically, residues 283–348 (RTTSWRTVFR…ANVKVASSLA (66 aa)) are mitochondrial matrix. Glutathione contacts are provided by residues 288-292 (RTVFR) and 351-354 (NSGQ). Residues 349–367 (FLNSGQAIIFSTALTLMMY) form a helical membrane-spanning segment. Over 368–382 (MGCRGIVTSNLTVGD) the chain is Mitochondrial intermembrane. The chain crosses the membrane as a helical span at residues 383–404 (LVMINQLVFQLSIPLNFLGSVY). Glutathione is bound at residue Gly-401. Topologically, residues 405-693 (REMRQAFTDM…FGESNKSGDA (289 aa)) are mitochondrial matrix. An ABC transporter domain is found at 443–679 (IQFDNVHFSY…NSVYTSMWHS (237 aa)). ATP is bound by residues Tyr-452 and 476-487 (GASGCGKSTILR).

This sequence belongs to the ABC transporter superfamily. ABCB family. Heavy Metal importer (TC 3.A.1.210) subfamily. In terms of assembly, homodimer.

It localises to the mitochondrion inner membrane. Functionally, performs an essential function in the generation of cytoplasmic iron-sulfur proteins by mediating the ATP-dependent export of Fe/S cluster precursors synthesized by nfs1 and other mitochondrial proteins. Hydrolyzes ATP. Binds glutathione and may function by transporting a glutathione-conjugated iron-sulfur compound. The chain is Iron-sulfur clusters transporter atm1, mitochondrial from Schizosaccharomyces pombe (strain 972 / ATCC 24843) (Fission yeast).